Here is a 492-residue protein sequence, read N- to C-terminus: Glutamyl-tRNA(Gln) amidotransferase subunit A (492 aa).

Catalysis depends on charge relay system residues Lys78 and Ser158. The active-site Acyl-ester intermediate is the Ser182.

This sequence belongs to the amidase family. GatA subfamily. Heterotrimer of A, B and C subunits.

It catalyses the reaction L-glutamyl-tRNA(Gln) + L-glutamine + ATP + H2O = L-glutaminyl-tRNA(Gln) + L-glutamate + ADP + phosphate + H(+). Its function is as follows. Allows the formation of correctly charged Gln-tRNA(Gln) through the transamidation of misacylated Glu-tRNA(Gln) in organisms which lack glutaminyl-tRNA synthetase. The reaction takes place in the presence of glutamine and ATP through an activated gamma-phospho-Glu-tRNA(Gln). This is Glutamyl-tRNA(Gln) amidotransferase subunit A from Rickettsia akari (strain Hartford).